Here is a 397-residue protein sequence, read N- to C-terminus: Ribosomal RNA large subunit methyltransferase I (397 aa).

The region spanning 2–80 is the PUA domain; that stretch reads AIRIKLKPGR…KEETIDADFF (79 aa).

The protein belongs to the methyltransferase superfamily. RlmI family.

The protein localises to the cytoplasm. The catalysed reaction is cytidine(1962) in 23S rRNA + S-adenosyl-L-methionine = 5-methylcytidine(1962) in 23S rRNA + S-adenosyl-L-homocysteine + H(+). Its function is as follows. Specifically methylates the cytosine at position 1962 (m5C1962) of 23S rRNA. This Shewanella frigidimarina (strain NCIMB 400) protein is Ribosomal RNA large subunit methyltransferase I.